The primary structure comprises 495 residues: Pleckstrin homology domain-containing family O member 2 (495 aa).

The region spanning 18–120 (TADKAGWIKK…WIKALNEGIN (103 aa)) is the PH domain. S165 and S168 each carry phosphoserine. Residues 171-411 (LSRLDLDVPD…ESPQHPRLPK (241 aa)) are disordered. Pro residues predominate over residues 198–213 (QEPPRALMPPVKPSPG). T233 bears the Phosphothreonine mark. Polar residues predominate over residues 235 to 244 (DSASSGANPE). A phosphoserine mark is found at S236, S238, S239, S274, and S292. A Phosphothreonine modification is found at T296. The span at 324 to 335 (SGVDASGSSQSS) shows a compositional bias: low complexity. Residues 336 to 350 (EAPETTSPEPTQVSV) are compositionally biased toward polar residues. Position 395 is a phosphoserine (S395). Residues 399 to 411 (LLRESPQHPRLPK) show a composition bias toward basic and acidic residues. Residues 444–469 (CAESLLSQAVEQLRQATQVLQEMRDL) adopt a coiled-coil conformation.

The chain is Pleckstrin homology domain-containing family O member 2 (Plekho2) from Mus musculus (Mouse).